The sequence spans 385 residues: Acetylornithine aminotransferase (385 aa).

Residues Gly-94–Thr-95 and Phe-126 each bind pyridoxal 5'-phosphate. Arg-129 is a N(2)-acetyl-L-ornithine binding site. A pyridoxal 5'-phosphate-binding site is contributed by Asp-211 to Gln-214. An N6-(pyridoxal phosphate)lysine modification is found at Lys-240. Residue Thr-267 coordinates N(2)-acetyl-L-ornithine. Thr-268 is a pyridoxal 5'-phosphate binding site.

The protein belongs to the class-III pyridoxal-phosphate-dependent aminotransferase family. ArgD subfamily. In terms of assembly, homodimer. Requires pyridoxal 5'-phosphate as cofactor.

The protein localises to the cytoplasm. The catalysed reaction is N(2)-acetyl-L-ornithine + 2-oxoglutarate = N-acetyl-L-glutamate 5-semialdehyde + L-glutamate. It functions in the pathway amino-acid biosynthesis; L-arginine biosynthesis; N(2)-acetyl-L-ornithine from L-glutamate: step 4/4. The sequence is that of Acetylornithine aminotransferase from Thermotoga maritima (strain ATCC 43589 / DSM 3109 / JCM 10099 / NBRC 100826 / MSB8).